A 397-amino-acid chain; its full sequence is MTAPGLTAAVEGIAHNKGELFASFDVDAFEVPHGRDEIWRFTPLRRLRGLHDGSARATGSATITVSERPGVYTQTVRRGDPRLGEGGVPTDRVAAQAFSSFNSATLVTVERDTQVVEPVGITVTGPGEGAVAYGHLQVRIEELGEAVVVIDHRGGGTYADNVEFVVDDAARLTAVWIADWADDTVHLSAHHARIGKDAVLRHVTVMLGGDVVRMSAGVRFCGAGGDAELLGLYFADDGQHLESRLLVDHAHPDCKSNVLYKGALQGDPASSLPDAHTVWVGDVLIRAQATGTDTFEVNRNLVLTDGARADSVPNLEIETGEIVGAGHASATGRFDDEQLFYLRSRGIPEAQARRLVVRGFFGEIIAKIAVPEVRERLTAAIEHELEITESTEKTTVS.

It belongs to the iron-sulfur cluster assembly SufBD family.

The polypeptide is Iron-sulfur cluster assembly SufBD family protein Mb1497 (Mycobacterium bovis (strain ATCC BAA-935 / AF2122/97)).